Reading from the N-terminus, the 393-residue chain is Dual specificity mitogen-activated protein kinase kinase 1 (393 aa).

The interval 1-27 (MPKKKPTPIQLNPAPDGSAVNGTSSAE) is disordered. The 294-residue stretch at 68–361 (FEKISELGAG…LKQLMVHAFI (294 aa)) folds into the Protein kinase domain. Residues 74-82 (LGAGNGGVV) and Lys-97 each bind ATP. The Proton acceptor role is filled by Asp-190. Phosphoserine; by RAF occurs at positions 218 and 222. The interval 270–307 (ELELLFGCQVEGDAAETPPRPRTPGRPLSSYGMDSRPP) is RAF1-binding. Thr-286 bears the Phosphothreonine mark. Thr-292 bears the Phosphothreonine; by MAPK1 mark. A Phosphoserine; by PAK modification is found at Ser-298.

This sequence belongs to the protein kinase superfamily. STE Ser/Thr protein kinase family. MAP kinase kinase subfamily. Found in a complex with at least BRAF, HRAS, MAP2K1, MAPK3/ERK1 and RGS14. Forms a heterodimer with MAP2K2/MEK2. Forms heterodimers with KSR2 which further dimerize to form tetramers. Interacts with KSR1 or KSR2 and BRAF; the interaction with KSR1 or KSR2 mediates KSR1-BRAF or KSR2-BRAF dimerization. Interacts with ARBB2, LAMTOR3, MAPK1/ERK2 and RAF1. Interacts with MAPK1/ERK2. Interacts with MORG1. Interacts with PPARG. Interacts with VRK2. Interacts with SGK1. Interacts with BIRC6/bruce. Interacts with KAT7; the interaction promotes KAT7 phosphorylation. Interacts with RAF1 and NEK10; the interaction is required for ERK1/2-signaling pathway activation in response to UV irradiation. Interacts with TRAF3IP3. Interacts with MOS. In terms of processing, phosphorylation at Ser-218 and Ser-222 by MAP kinase kinase kinases (BRAF or MEKK1) positively regulates kinase activity. Also phosphorylated at Thr-292 by MAPK1/ERK2 and at Ser-298 by PAK. MAPK1/ERK2 phosphorylation of Thr-292 occurs in response to cellular adhesion and leads to inhibition of Ser-298 phosphorylation by PAK. Autophosphorylated at Ser-218 and Ser-222, autophosphosphorylation is promoted by NEK10 following UV irradiation.

Its subcellular location is the cytoplasm. The protein resides in the cytoskeleton. It is found in the microtubule organizing center. It localises to the centrosome. The protein localises to the spindle pole body. Its subcellular location is the nucleus. The protein resides in the membrane. It catalyses the reaction L-seryl-[protein] + ATP = O-phospho-L-seryl-[protein] + ADP + H(+). It carries out the reaction L-threonyl-[protein] + ATP = O-phospho-L-threonyl-[protein] + ADP + H(+). The enzyme catalyses L-tyrosyl-[protein] + ATP = O-phospho-L-tyrosyl-[protein] + ADP + H(+). With respect to regulation, ras proteins such as HRAS mediate the activation of RAF proteins such as RAF1 or BRAF which in turn activate extracellular signal-regulated kinases (ERK) through MAPK (mitogen-activated protein kinases) and ERK kinases MAP2K1/MEK1 and MAP2K2/MEK2. Activation occurs through phosphorylation of Ser-218 and Ser-222. MAP2K1/MEK1 binds KSR1 or KSR2 releasing the inhibitory intramolecular interaction between KSR1 or KSR2 protein kinase and N-terminal domains. This allows KSR1 or KSR2 dimerization with BRAF leading to BRAF activation and phosphorylation of MAP2K1. MAP2K1/MEK1 is also the target of negative feed-back regulation by its substrate kinases, such as MAPK1/ERK2. These phosphorylate MAP2K1/MEK1 on Thr-292, thereby facilitating dephosphorylation of the activating residues Ser-218 and Ser-222. Inhibited by serine/threonine phosphatase 2A. Functionally, dual specificity protein kinase which acts as an essential component of the MAP kinase signal transduction pathway. Binding of extracellular ligands such as growth factors, cytokines and hormones to their cell-surface receptors activates RAS and this initiates RAF1 activation. RAF1 then further activates the dual-specificity protein kinases MAP2K1/MEK1 and MAP2K2/MEK2. Both MAP2K1/MEK1 and MAP2K2/MEK2 function specifically in the MAPK/ERK cascade, and catalyze the concomitant phosphorylation of a threonine and a tyrosine residue in a Thr-Glu-Tyr sequence located in the extracellular signal-regulated kinases MAPK3/ERK1 and MAPK1/ERK2, leading to their activation and further transduction of the signal within the MAPK/ERK cascade. Activates BRAF in a KSR1 or KSR2-dependent manner; by binding to KSR1 or KSR2 releases the inhibitory intramolecular interaction between KSR1 or KSR2 protein kinase and N-terminal domains which promotes KSR1 or KSR2-BRAF dimerization and BRAF activation. Depending on the cellular context, this pathway mediates diverse biological functions such as cell growth, adhesion, survival and differentiation, predominantly through the regulation of transcription, metabolism and cytoskeletal rearrangements. One target of the MAPK/ERK cascade is peroxisome proliferator-activated receptor gamma (PPARG), a nuclear receptor that promotes differentiation and apoptosis. MAP2K1/MEK1 has been shown to export PPARG from the nucleus. The MAPK/ERK cascade is also involved in the regulation of endosomal dynamics, including lysosome processing and endosome cycling through the perinuclear recycling compartment (PNRC), as well as in the fragmentation of the Golgi apparatus during mitosis. In Rattus norvegicus (Rat), this protein is Dual specificity mitogen-activated protein kinase kinase 1.